The sequence spans 1067 residues: Carbamoyl phosphate synthase large chain (1067 aa).

Residues 1–401 (MPLNKDIKKV…AFLKGIRSLE (401 aa)) are carboxyphosphate synthetic domain. The ATP site is built by Arg129, Arg169, Gly175, Gly176, Lys208, Val210, Glu215, Gly241, Ile242, His243, Gln284, and Glu298. The ATP-grasp 1 domain occupies 133 to 327 (RDMMNRINQP…IAKVAAKIAL (195 aa)). The Mg(2+) site is built by Gln284, Glu298, and Asn300. Positions 284, 298, and 300 each coordinate Mn(2+). The segment at 402 to 549 (IGKYSLEHKK…YSTYEQYDEV (148 aa)) is oligomerization domain. Positions 550-932 (VVSDNKKVVV…ALYKGFVGAS (383 aa)) are carbamoyl phosphate synthetic domain. The ATP-grasp 2 domain maps to 674-864 (DDLLERLNIA…IVDIATRIML (191 aa)). ATP contacts are provided by Arg710, Lys749, Leu751, Glu755, Gly780, Val781, His782, Ser783, Gln823, and Glu835. Residues Gln823, Glu835, and Asn837 each contribute to the Mg(2+) site. Mn(2+)-binding residues include Gln823, Glu835, and Asn837. Residues 933–1067 (MYTGDKGKTI…NRELEVFNLI (135 aa)) form the MGS-like domain. The allosteric domain stretch occupies residues 933–1067 (MYTGDKGKTI…NRELEVFNLI (135 aa)).

Belongs to the CarB family. In terms of assembly, composed of two chains; the small (or glutamine) chain promotes the hydrolysis of glutamine to ammonia, which is used by the large (or ammonia) chain to synthesize carbamoyl phosphate. Tetramer of heterodimers (alpha,beta)4. Mg(2+) is required as a cofactor. The cofactor is Mn(2+).

The enzyme catalyses hydrogencarbonate + L-glutamine + 2 ATP + H2O = carbamoyl phosphate + L-glutamate + 2 ADP + phosphate + 2 H(+). It carries out the reaction hydrogencarbonate + NH4(+) + 2 ATP = carbamoyl phosphate + 2 ADP + phosphate + 2 H(+). It functions in the pathway amino-acid biosynthesis; L-arginine biosynthesis; carbamoyl phosphate from bicarbonate: step 1/1. The protein operates within pyrimidine metabolism; UMP biosynthesis via de novo pathway; (S)-dihydroorotate from bicarbonate: step 1/3. Its function is as follows. Large subunit of the glutamine-dependent carbamoyl phosphate synthetase (CPSase). CPSase catalyzes the formation of carbamoyl phosphate from the ammonia moiety of glutamine, carbonate, and phosphate donated by ATP, constituting the first step of 2 biosynthetic pathways, one leading to arginine and/or urea and the other to pyrimidine nucleotides. The large subunit (synthetase) binds the substrates ammonia (free or transferred from glutamine from the small subunit), hydrogencarbonate and ATP and carries out an ATP-coupled ligase reaction, activating hydrogencarbonate by forming carboxy phosphate which reacts with ammonia to form carbamoyl phosphate. This Clostridium perfringens (strain SM101 / Type A) protein is Carbamoyl phosphate synthase large chain.